The sequence spans 170 residues: Cytochrome c-type biogenesis protein CcmE (170 aa).

The Cytoplasmic segment spans residues 1–7 (MTRKKRR). A helical; Signal-anchor for type II membrane protein transmembrane segment spans residues 8-28 (LILIAACGSVLALAVGLILYA). Residues 29–170 (MSGSIVFFRS…DSTLGPRSER (142 aa)) are Periplasmic-facing. The heme site is built by His122 and Tyr126. The segment at 132 to 170 (ADALKAQGRWQEGGPNRGGPAPKPATAAADSTLGPRSER) is disordered.

Belongs to the CcmE/CycJ family.

Its subcellular location is the cell inner membrane. Heme chaperone required for the biogenesis of c-type cytochromes. Transiently binds heme delivered by CcmC and transfers the heme to apo-cytochromes in a process facilitated by CcmF and CcmH. This chain is Cytochrome c-type biogenesis protein CcmE, found in Methylobacterium radiotolerans (strain ATCC 27329 / DSM 1819 / JCM 2831 / NBRC 15690 / NCIMB 10815 / 0-1).